The following is a 364-amino-acid chain: Homeobox protein Nkx-6.1 (364 aa).

The segment at 35-134 is disordered; the sequence is LYPATYPPLP…SSSSSASATS (100 aa). Low complexity-rich tracts occupy residues 48-92 and 109-134; these read PSSS…LSAA and ASGAALPSASPSGSSSSSSSSASATS. Residues 101–268 are repressor domain; sequence LSRPSMPVAS…KYLAGPERAR (168 aa). Residue R189 is modified to Asymmetric dimethylarginine. Residues 236 to 295 constitute a DNA-binding region (homeobox); that stretch reads RKHTRPTFSGQQIFALEKTFEQTKYLAGPERARLAYSLGMTESQVKVWFQNRRTKWRKKH. The tract at residues 294–364 is disordered; sequence KHAAEMATAK…LHASEAEGSS (71 aa). Residues 304 to 317 show a composition bias toward basic and acidic residues; sequence KKQDSETERLKGTS. Residues 306-364 are involved in DNA-binding; it reads QDSETERLKGTSENEEEDDDYNKPLDPNSDDEKITQLLKKHKSSSGGLLLHASEAEGSS.

As to expression, pancreatic beta cells.

It localises to the nucleus. Together with NKX2-2 and IRX3 acts to restrict the generation of motor neurons to the appropriate region of the neural tube. Belongs to the class II proteins of neuronal progenitor factors, which are induced by SHH signals. Transcription factor which binds to specific A/T-rich DNA sequences in the promoter regions of a number of genes. Involved in transcriptional regulation in islet beta cells. Binds to the insulin promoter and is involved in regulation of the insulin gene. This is Homeobox protein Nkx-6.1 (NKX6-1) from Mesocricetus auratus (Golden hamster).